A 329-amino-acid polypeptide reads, in one-letter code: T-lymphocyte activation antigen CD86 (329 aa).

The N-terminal stretch at 1–23 is a signal peptide; it reads MDPQCTMGLSNILFVMAFLLSGA. Over 24–247 the chain is Extracellular; that stretch reads APLKIQAYFN…DPQPPPDHIP (224 aa). N-linked (GlcNAc...) asparagine glycans are attached at residues N33, N47, N135, N146, N154, N177, N192, and N213. Positions 33-131 constitute an Ig-like V-type domain; that stretch reads NETADLPCQF…RIHQMNSELS (99 aa). Residues C40 and C110 are joined by a disulfide bond. The Ig-like C2-type domain maps to 150 to 225; it reads NVYINLTCSS…IFCILETDKT (76 aa). A disulfide bridge connects residues C157 and C218. Residues 248 to 268 form a helical membrane-spanning segment; the sequence is WITAVLPTVIICVMVFCLILW. Over 269–329 the chain is Cytoplasmic; the sequence is KWKKKKRPRN…SSCDKSDTCF (61 aa). The interval 277–329 is disordered; it reads RNSYKCGTNTMEREESEQTKKREKIHIPERSDEAQRVFKSSKTSSCDKSDTCF. The span at 287 to 312 shows a compositional bias: basic and acidic residues; the sequence is MEREESEQTKKREKIHIPERSDEAQR.

As to quaternary structure, homodimer. Interacts with MARCH8. Interacts (via cytoplasmic domain) with PHB1 and PHB2; the interactions increases after priming with CD40. Interacts with CD28. (Microbial infection) Interacts with adenovirus subgroup b fiber protein. In terms of assembly, (Microbial infection) Interacts with Orthopoxvirus OPG038/M2 protein, inhibiting the interaction with CTLA4 and CD28. Post-translationally, polyubiquitinated; which is promoted by MARCH8 and results in endocytosis and lysosomal degradation. As to expression, expressed by activated B-lymphocytes and monocytes.

It is found in the cell membrane. Receptor involved in the costimulatory signal essential for T-lymphocyte proliferation and interleukin-2 production, by binding CD28 or CTLA-4. May play a critical role in the early events of T-cell activation and costimulation of naive T-cells, such as deciding between immunity and anergy that is made by T-cells within 24 hours after activation. Also involved in the regulation of B cells function, plays a role in regulating the level of IgG(1) produced. Upon CD40 engagement, activates NF-kappa-B signaling pathway via phospholipase C and protein kinase C activation. Functionally, interferes with the formation of CD86 clusters, and thus acts as a negative regulator of T-cell activation. Its function is as follows. (Microbial infection) Acts as a receptor for adenovirus subgroup B. The chain is T-lymphocyte activation antigen CD86 (CD86) from Homo sapiens (Human).